We begin with the raw amino-acid sequence, 1193 residues long: DNA-directed RNA polymerase subunit beta (1193 aa).

The span at Ile1152–Glu1161 shows a compositional bias: acidic residues. Positions Ile1152 to Glu1193 are disordered. The segment covering Asp1184 to Glu1193 has biased composition (basic and acidic residues).

It belongs to the RNA polymerase beta chain family. The RNAP catalytic core consists of 2 alpha, 1 beta, 1 beta' and 1 omega subunit. When a sigma factor is associated with the core the holoenzyme is formed, which can initiate transcription.

It catalyses the reaction RNA(n) + a ribonucleoside 5'-triphosphate = RNA(n+1) + diphosphate. Its function is as follows. DNA-dependent RNA polymerase catalyzes the transcription of DNA into RNA using the four ribonucleoside triphosphates as substrates. The protein is DNA-directed RNA polymerase subunit beta of Bacillus pumilus (strain SAFR-032).